The chain runs to 284 residues: 2-dehydro-3-deoxyphosphooctonate aldolase (284 aa).

This sequence belongs to the KdsA family.

It localises to the cytoplasm. The catalysed reaction is D-arabinose 5-phosphate + phosphoenolpyruvate + H2O = 3-deoxy-alpha-D-manno-2-octulosonate-8-phosphate + phosphate. It participates in carbohydrate biosynthesis; 3-deoxy-D-manno-octulosonate biosynthesis; 3-deoxy-D-manno-octulosonate from D-ribulose 5-phosphate: step 2/3. The protein operates within bacterial outer membrane biogenesis; lipopolysaccharide biosynthesis. This chain is 2-dehydro-3-deoxyphosphooctonate aldolase, found in Haemophilus influenzae (strain PittEE).